The sequence spans 135 residues: Endocuticle structural glycoprotein SgAbd-2 (135 aa).

A Pyrrolidone carboxylic acid modification is found at Gln1. O-linked (HexNAc...) threonine glycosylation is found at Thr11 and Thr100. Positions 32–102 (DGSYAYSYQT…AEGAHLPTPP (71 aa)) constitute a Chitin-binding type R&amp;R domain.

Its function is as follows. Component of the abdominal endocuticle. This is Endocuticle structural glycoprotein SgAbd-2 from Schistocerca gregaria (Desert locust).